Reading from the N-terminus, the 137-residue chain is MIWKRHLTLDELNATSQNTLVAHLGIVYTHLGDDVLEAEMPVDARTHQPFGLLHGGASAALAETLGSMAGYLMTRDGQCVVGTELNATHHRAVSQGKVRGVCLPLHLGRQNQSWEITLFDEQGRRCCTCRLGTAVMG.

Glu-63 serves as the catalytic Nucleophile or proton acceptor.

This sequence belongs to the thioesterase PaaI family. In terms of assembly, homotetramer. Dimer of dimers. Interacts specifically with the aryl carrier protein (ArCP) domain of EntB.

Its subcellular location is the cytoplasm. It functions in the pathway siderophore biosynthesis; enterobactin biosynthesis. Its function is as follows. Required for optimal enterobactin synthesis. Acts as a proofreading enzyme that prevents EntB misacylation by hydrolyzing the thioester bound existing between EntB and wrongly charged molecules. The chain is Proofreading thioesterase EntH from Salmonella paratyphi A (strain AKU_12601).